The following is a 544-amino-acid chain: Protein angel homolog 2 (544 aa).

It belongs to the CCR4/nocturin family.

The chain is Protein angel homolog 2 (ANGEL2) from Bos taurus (Bovine).